We begin with the raw amino-acid sequence, 600 residues long: Leiomodin-1 (600 aa).

The residue at position 12 (serine 12) is a Phosphoserine. Disordered stretches follow at residues valine 38–glycine 61, methionine 80–arginine 324, and aspartate 472–asparagine 573. Composition is skewed to basic and acidic residues over residues methionine 80–arginine 127, phenylalanine 134–lysine 240, aspartate 247–lysine 256, aspartate 263–glutamate 292, and aspartate 472–glutamate 497. 2 positions are modified to phosphoserine: serine 85 and serine 135. A run of 8 repeats spans residues alanine 165–glutamate 180, arginine 181–arginine 196, asparagine 197–lysine 212, glutamate 213–arginine 228, asparagine 229–glycine 244, asparagine 245–glycine 260, asparagine 261–proline 276, and leucine 277–lysine 293. The interval alanine 165–lysine 293 is 8 X approximate tandem repeats. The tract at residues serine 508–lysine 527 is 5 X 4 AA approximate tandem repeats. 2 stretches are compositionally biased toward pro residues: residues lysine 510–lysine 522 and alanine 532–proline 543. The residue at position 555 (serine 555) is a Phosphoserine. Positions serine 574 to valine 593 constitute a WH2 domain.

This sequence belongs to the tropomodulin family. As to expression, detected in lung vascular smooth muscle (at protein level). Detected in thyroid and extraocular smooth muscle, but not skeletal muscle. Detected in heart, aorta, skeletal muscle, colon, urinary bladder, uterus, stomach, and small intestine.

Its subcellular location is the cytoplasm. The protein localises to the myofibril. The protein resides in the sarcomere. It localises to the cytoskeleton. Its function is as follows. Required for proper contractility of visceral smooth muscle cells. Mediates nucleation of actin filaments. This is Leiomodin-1 (LMOD1) from Homo sapiens (Human).